We begin with the raw amino-acid sequence, 683 residues long: MLATDSTPALLAASVVLAVSLVSYVIQLNRSRTHRAFWASHPWVGVRDEWFSGARTKLRIVTSVREMVEDGFHRFSQFKTAFALPNIGEPPWLVLPPASLREFLAKPDADLDHNIIHEEQLQNYYTQGALGHHAATIPLQFDVVRRQLTRELPLVAAALHDELHKSFQDYWGTDTIAAKQIDLLATCFKIVTRTANRVFIGADICRSEAFLEHLRRYSDAVGRAGIIIRLFPRWLRPVVTPAVTVWYRRDLAVCREICVPVIRCRVQQTIEKRKDVDCTWKAPVDVLQWLIEAALRRNDAAELDPLLLTQRLLMLNFVSIETTSMAITHAIADLYGSADADSFIAGLQEECERALPHGELWTKAQLDNLVRIDSAIRESMRVSDFSHIQLPRLVANPHGVDFQSTGNPPLHVPPGIRLCVPAHSIHRDPALYPDPLTYNAFRFVIEPSVGAGDATEPAPKQASLATTTDSFLVFGHGRHACPGRFFAAHLMKLMLAYIVRHYDVARLTQPVDKQTTECTKAPFHMEYGGGPLAYMGHSLTGATRLQDTLCFMKFDSSQYLDTSPIVTIPSYIYWPSLNTMNQSSKYSLYVFVVLVACVAALFIGIGIYQMYHPLDRDNAAYREVPHEQRAYMRKAGSPPAFSKFIYRLYCPNIQWKVKRCIGVLFLLFAYYNSRLRLSSATKN.

Residues 8 to 28 traverse the membrane as a helical segment; it reads PALLAASVVLAVSLVSYVIQL. N29 is a glycosylation site (N-linked (GlcNAc...) asparagine). C481 is a binding site for heme. An N-linked (GlcNAc...) asparagine glycan is attached at N581. The chain crosses the membrane as a helical span at residues 588–608; the sequence is LYVFVVLVACVAALFIGIGIY.

Belongs to the cytochrome P450 family. Requires heme as cofactor.

It localises to the membrane. It functions in the pathway antifungal biosynthesis. Its function is as follows. Cytochrome P450 monooxygenase; part of the gene cluster that mediates the de novo generation of L-homotyrosine from acetyl-CoA and 4-hydroxyphenyl-pyruvate. L-homotyrosine is a building block of echinocandin B, a fungal lipidated cyclic hexapeptide that acts as an antifungal agent. L-homotyrosine 4-hydroxyphenyl-pyruvate first undergoes an aldol-type condensation by htyA with the C-2 of acetyl-CoA followed by the release of CoA to form 2-(4-hydroxybenzyl)-malate. This is followed by isomerization of 2-(4-hydroxy-benzyl)-malate to 3-(4-hydroxybenzyl)-malate by htyD. Thereafter, 3-(4-hydroxybenzyl)-malate undergoes decarboxylation and oxidation to form 2-oxo-4-(4-hydroxybenzyl)butanoic acid, coupled to reduction of NAD(+) to NADH by htyC. The product then undergoes transamination catalyzed by htyB to form L-homotyrosine. The polypeptide is Cytochrome P450 monooxygenase htyF (Aspergillus rugulosus (Emericella rugulosa)).